The following is a 309-amino-acid chain: Ankyrin repeat and SOCS box protein 12 (309 aa).

5 ANK repeats span residues 63–92 (VPGT…DVDS), 96–125 (KAQT…SPGG), 129–158 (NNCS…EANV), 171–200 (SCSG…DPDY), and 213–243 (RPRT…NIYL). Positions 268 to 308 (PRSLLSQVRLVVRRALCQAGQPQAINQLDIPPMLISYLKHQ) constitute an SOCS box domain.

It belongs to the ankyrin SOCS box (ASB) family. In terms of assembly, interacts with CUL5 and RNF7.

Its pathway is protein modification; protein ubiquitination. Functionally, probable substrate-recognition component of a SCF-like ECS (Elongin-Cullin-SOCS-box protein) E3 ubiquitin-protein ligase complex which mediates the ubiquitination and subsequent proteasomal degradation of target proteins. The polypeptide is Ankyrin repeat and SOCS box protein 12 (ASB12) (Homo sapiens (Human)).